A 149-amino-acid polypeptide reads, in one-letter code: Large ribosomal subunit protein bL9 (149 aa).

Belongs to the bacterial ribosomal protein bL9 family.

In terms of biological role, binds to the 23S rRNA. In Acidothermus cellulolyticus (strain ATCC 43068 / DSM 8971 / 11B), this protein is Large ribosomal subunit protein bL9.